Consider the following 452-residue polypeptide: UDP-glycosyltransferase 79B11 (452 aa).

UDP-alpha-D-glucose is bound by residues Ser260, 319-325, 340-348, and 362-365; these read VQQPSWQ, HCGFGSMWE, and LNDQ.

Belongs to the UDP-glycosyltransferase family.

This chain is UDP-glycosyltransferase 79B11 (UGT79B11), found in Arabidopsis thaliana (Mouse-ear cress).